A 429-amino-acid chain; its full sequence is UDP-N-acetylglucosamine 1-carboxyvinyltransferase (429 aa).

Lys22–Asn23 is a phosphoenolpyruvate binding site. Residue Arg102 participates in UDP-N-acetyl-alpha-D-glucosamine binding. The active-site Proton donor is Cys126. Cys126 bears the 2-(S-cysteinyl)pyruvic acid O-phosphothioketal mark. 2 residues coordinate UDP-N-acetyl-alpha-D-glucosamine: Asp316 and Ile338.

It belongs to the EPSP synthase family. MurA subfamily.

The protein resides in the cytoplasm. The catalysed reaction is phosphoenolpyruvate + UDP-N-acetyl-alpha-D-glucosamine = UDP-N-acetyl-3-O-(1-carboxyvinyl)-alpha-D-glucosamine + phosphate. It participates in cell wall biogenesis; peptidoglycan biosynthesis. Its function is as follows. Cell wall formation. Adds enolpyruvyl to UDP-N-acetylglucosamine. This Methylorubrum extorquens (strain PA1) (Methylobacterium extorquens) protein is UDP-N-acetylglucosamine 1-carboxyvinyltransferase.